The chain runs to 178 residues: MLVSGIDDGYFPLKYKGRNGRTVMLSVVFKDYDIIDIDFDFIIVDGDDGTSVLNSLQTGDVCILDGLTFGGFNFVNPSELKSKYIIFYSSKPNIFKITRALDRHFNDERRDIIINVISNLTRVSTLRGDVYIYTNLDLKMAKNIIEEYQVFDRIPLPLKIAHEISSSLSTFLLSKKII.

The protein belongs to the UPF0215 family.

The sequence is that of UPF0215 protein STK_03040 from Sulfurisphaera tokodaii (strain DSM 16993 / JCM 10545 / NBRC 100140 / 7) (Sulfolobus tokodaii).